The sequence spans 235 residues: Purine nucleoside phosphorylase DeoD-type (235 aa).

H4 lines the a purine D-ribonucleoside pocket. Residues G20, R24, R43, and 87–90 contribute to the phosphate site; that span reads RVGT. Residues E162, 179-181, and 203-204 each bind a purine D-ribonucleoside; these read EME and SD. D204 functions as the Proton donor in the catalytic mechanism.

It belongs to the PNP/UDP phosphorylase family. In terms of assembly, homohexamer; trimer of homodimers.

The catalysed reaction is a purine D-ribonucleoside + phosphate = a purine nucleobase + alpha-D-ribose 1-phosphate. It catalyses the reaction a purine 2'-deoxy-D-ribonucleoside + phosphate = a purine nucleobase + 2-deoxy-alpha-D-ribose 1-phosphate. Catalyzes the reversible phosphorolytic breakdown of the N-glycosidic bond in the beta-(deoxy)ribonucleoside molecules, with the formation of the corresponding free purine bases and pentose-1-phosphate. The chain is Purine nucleoside phosphorylase DeoD-type from Bacillus cytotoxicus (strain DSM 22905 / CIP 110041 / 391-98 / NVH 391-98).